The following is a 55-amino-acid chain: ATP synthase F(0) complex subunit 8 (55 aa).

Residues 8–24 traverse the membrane as a helical segment; that stretch reads PWFMIMLMTWFTYSLLI.

This sequence belongs to the ATPase protein 8 family. Component of the ATP synthase complex composed at least of ATP5F1A/subunit alpha, ATP5F1B/subunit beta, ATP5MC1/subunit c (homooctomer), MT-ATP6/subunit a, MT-ATP8/subunit 8, ATP5ME/subunit e, ATP5MF/subunit f, ATP5MG/subunit g, ATP5MK/subunit k, ATP5MJ/subunit j, ATP5F1C/subunit gamma, ATP5F1D/subunit delta, ATP5F1E/subunit epsilon, ATP5PF/subunit F6, ATP5PB/subunit b, ATP5PD/subunit d, ATP5PO/subunit OSCP. ATP synthase complex consists of a soluble F(1) head domain (subunits alpha(3) and beta(3)) - the catalytic core - and a membrane F(0) domain - the membrane proton channel (subunits c, a, 8, e, f, g, k and j). These two domains are linked by a central stalk (subunits gamma, delta, and epsilon) rotating inside the F1 region and a stationary peripheral stalk (subunits F6, b, d, and OSCP).

It localises to the mitochondrion membrane. Subunit 8, of the mitochondrial membrane ATP synthase complex (F(1)F(0) ATP synthase or Complex V) that produces ATP from ADP in the presence of a proton gradient across the membrane which is generated by electron transport complexes of the respiratory chain. ATP synthase complex consist of a soluble F(1) head domain - the catalytic core - and a membrane F(1) domain - the membrane proton channel. These two domains are linked by a central stalk rotating inside the F(1) region and a stationary peripheral stalk. During catalysis, ATP synthesis in the catalytic domain of F(1) is coupled via a rotary mechanism of the central stalk subunits to proton translocation. In vivo, can only synthesize ATP although its ATP hydrolase activity can be activated artificially in vitro. Part of the complex F(0) domain. The protein is ATP synthase F(0) complex subunit 8 of Coturnix japonica (Japanese quail).